Reading from the N-terminus, the 363-residue chain is Chorismate synthase (363 aa).

NADP(+)-binding residues include R48 and R54. Residues 125 to 127 (RSS), 237 to 238 (NA), G277, 292 to 296 (KPTSS), and R318 contribute to the FMN site.

It belongs to the chorismate synthase family. Homotetramer. FMNH2 serves as cofactor.

The catalysed reaction is 5-O-(1-carboxyvinyl)-3-phosphoshikimate = chorismate + phosphate. It functions in the pathway metabolic intermediate biosynthesis; chorismate biosynthesis; chorismate from D-erythrose 4-phosphate and phosphoenolpyruvate: step 7/7. In terms of biological role, catalyzes the anti-1,4-elimination of the C-3 phosphate and the C-6 proR hydrogen from 5-enolpyruvylshikimate-3-phosphate (EPSP) to yield chorismate, which is the branch point compound that serves as the starting substrate for the three terminal pathways of aromatic amino acid biosynthesis. This reaction introduces a second double bond into the aromatic ring system. The polypeptide is Chorismate synthase (Ectopseudomonas mendocina (strain ymp) (Pseudomonas mendocina)).